A 962-amino-acid polypeptide reads, in one-letter code: Leucine--tRNA ligase (962 aa).

The 'HIGH' region motif lies at 41-51 (PYLNGNLHAGH). The 'KMSKS' region motif lies at 631-635 (KMSKS). Lysine 634 provides a ligand contact to ATP.

Belongs to the class-I aminoacyl-tRNA synthetase family.

The protein localises to the cytoplasm. It catalyses the reaction tRNA(Leu) + L-leucine + ATP = L-leucyl-tRNA(Leu) + AMP + diphosphate. This chain is Leucine--tRNA ligase, found in Methanococcoides burtonii (strain DSM 6242 / NBRC 107633 / OCM 468 / ACE-M).